A 361-amino-acid polypeptide reads, in one-letter code: MAALSLKGVRKSYDGKQHVLHGIDVEIADGEFIVLVGPSGCGKSTLLRMIAGLESVTDGEIAIGDRVVNTLEPKDRDIAMVFQNYALYPHMTVAQNMGYGLKIRGIERATIDSRVAAAAKILELEPLLARRPRELSGGQRQRVAMGRAIVREPSVFLFDEPLSNLDAKLRVQMRLEIQRLHARLATTSVYVTHDQIEAMTLAQRVIVMNRGYAEQIGAPVDVYEKPATVFVAGFIGSPAMNLMHGRLSEDGASFTVAGGGPALPVAGAPGIGREIATGRDWVLGVRPEHMTPQPGVAQATLPVDSCELLGADNLAHGRWGDHDIAVRLPHADRPARGTALAAALPAHRLHFFDPESGKRAG.

Residues 4 to 235 (LSLKGVRKSY…PATVFVAGFI (232 aa)) form the ABC transporter domain. An ATP-binding site is contributed by 37–44 (GPSGCGKS).

This sequence belongs to the ABC transporter superfamily. sn-glycerol-3-phosphate importer (TC 3.A.1.1.3) family. As to quaternary structure, the complex is composed of two ATP-binding proteins (UgpC), two transmembrane proteins (UgpA and UgpE) and a solute-binding protein (UgpB).

Its subcellular location is the cell inner membrane. It catalyses the reaction sn-glycerol 3-phosphate(out) + ATP + H2O = sn-glycerol 3-phosphate(in) + ADP + phosphate + H(+). Functionally, part of the ABC transporter complex UgpBAEC involved in sn-glycerol-3-phosphate (G3P) import. Responsible for energy coupling to the transport system. This Burkholderia cenocepacia (strain HI2424) protein is sn-glycerol-3-phosphate import ATP-binding protein UgpC.